The sequence spans 1224 residues: ATP-dependent helicase/deoxyribonuclease subunit B (1224 aa).

The 326-residue stretch at 1 to 326 (MSLRFILGRA…VCAAANRRSE (326 aa)) folds into the UvrD-like helicase ATP-binding domain. Residue 8 to 15 (GRAGTGKS) coordinates ATP. The region spanning 283–584 (QSAPRFQHPE…KLSLIPPELD (302 aa)) is the UvrD-like helicase C-terminal domain. [4Fe-4S] cluster is bound by residues cysteine 841, cysteine 1176, cysteine 1179, and cysteine 1185.

Belongs to the helicase family. AddB/RexB type 1 subfamily. In terms of assembly, heterodimer of AddA and AddB. It depends on Mg(2+) as a cofactor. [4Fe-4S] cluster serves as cofactor.

The heterodimer acts as both an ATP-dependent DNA helicase and an ATP-dependent, dual-direction single-stranded exonuclease. Recognizes the chi site generating a DNA molecule suitable for the initiation of homologous recombination. The AddB subunit has 5' -&gt; 3' nuclease activity but not helicase activity. The polypeptide is ATP-dependent helicase/deoxyribonuclease subunit B (Heliobacterium modesticaldum (strain ATCC 51547 / Ice1)).